Here is a 92-residue protein sequence, read N- to C-terminus: Small ribosomal subunit protein bS16 (92 aa).

This sequence belongs to the bacterial ribosomal protein bS16 family.

This chain is Small ribosomal subunit protein bS16, found in Staphylococcus carnosus (strain TM300).